A 345-amino-acid polypeptide reads, in one-letter code: Anthranilate phosphoribosyltransferase (345 aa).

Residues Gly84, 87–88 (GD), Thr92, 94–97 (NIST), 112–120 (KHGNRSVSS), and Ser124 each bind 5-phospho-alpha-D-ribose 1-diphosphate. Gly84 is a binding site for anthranilate. Ser96 is a binding site for Mg(2+). Anthranilate is bound at residue Asn115. Arg170 is an anthranilate binding site. Residues Asp229 and Glu230 each contribute to the Mg(2+) site.

This sequence belongs to the anthranilate phosphoribosyltransferase family. In terms of assembly, homodimer. The cofactor is Mg(2+).

It carries out the reaction N-(5-phospho-beta-D-ribosyl)anthranilate + diphosphate = 5-phospho-alpha-D-ribose 1-diphosphate + anthranilate. The protein operates within amino-acid biosynthesis; L-tryptophan biosynthesis; L-tryptophan from chorismate: step 2/5. Its function is as follows. Catalyzes the transfer of the phosphoribosyl group of 5-phosphorylribose-1-pyrophosphate (PRPP) to anthranilate to yield N-(5'-phosphoribosyl)-anthranilate (PRA). The polypeptide is Anthranilate phosphoribosyltransferase (Xanthomonas axonopodis pv. citri (strain 306)).